The following is a 98-amino-acid chain: Large ribosomal subunit protein uL23 (98 aa).

Belongs to the universal ribosomal protein uL23 family. In terms of assembly, part of the 50S ribosomal subunit. Contacts protein L29, and trigger factor when it is bound to the ribosome.

Its function is as follows. One of the early assembly proteins it binds 23S rRNA. One of the proteins that surrounds the polypeptide exit tunnel on the outside of the ribosome. Forms the main docking site for trigger factor binding to the ribosome. The chain is Large ribosomal subunit protein uL23 from Chromohalobacter salexigens (strain ATCC BAA-138 / DSM 3043 / CIP 106854 / NCIMB 13768 / 1H11).